A 148-amino-acid chain; its full sequence is Lipoprotein MlpH (148 aa).

Positions 1 to 17 (MKIINILFCLFLLMLNG) are cleaved as a signal peptide. Cys-18 carries N-palmitoyl cysteine lipidation. Residue Cys-18 is the site of S-diacylglycerol cysteine attachment. The segment at 26-61 (LKNNAQQTKSRRKRDLTQKEVTQEKPKSKEELLREK) is disordered. Basic and acidic residues predominate over residues 40–61 (DLTQKEVTQEKPKSKEELLREK).

This sequence belongs to the Multicopy lipoprotein (Mlp) family.

The protein resides in the cell outer membrane. An outer membrane protein that may participate in pathogenesis. Some human Lyme disease patients have antibodies against this protein. The Mlp proteins probably undergo intragenic recombination, generating new alleles. The chain is Lipoprotein MlpH from Borreliella burgdorferi (strain ATCC 35210 / DSM 4680 / CIP 102532 / B31) (Borrelia burgdorferi).